Here is a 78-residue protein sequence, read N- to C-terminus: uncharacterized protein (78 aa).

This is an uncharacterized protein from Saccharomyces cerevisiae (strain ATCC 204508 / S288c) (Baker's yeast).